We begin with the raw amino-acid sequence, 367 residues long: Uracil nucleotide/cysteinyl leukotriene receptor (367 aa).

Positions 1–28 (MSKRSWWAGSRKPPREMLKLSGSDSSQS) are disordered. At 1-64 (MSKRSWWAGS…TPLENMLFAS (64 aa)) the chain is on the extracellular side. Residue N42 is glycosylated (N-linked (GlcNAc...) asparagine). A helical membrane pass occupies residues 65 to 85 (FYLLDFILALVGNTLALWLFI). At 86-92 (RDHKSGT) the chain is on the cytoplasmic side. The chain crosses the membrane as a helical span at residues 93-113 (PANVFLMHLAVADLSCVLVLP). The Extracellular portion of the chain corresponds to 114–133 (TRLVYHFSGNHWPFGEIACR). A disulfide bond links C132 and C209. The chain crosses the membrane as a helical span at residues 134–154 (LTGFLFYLNMYASIYFLTCIS). The Cytoplasmic segment spans residues 155–175 (ADRFLAIVHPVKSLKLRRPLY). The helical transmembrane segment at 176 to 196 (AHLACAFLWVVVAVAMAPLLV) threads the bilayer. Over 197 to 223 (SPQTVQTNHTVVCLQLYREKASHHALV) the chain is Extracellular. N204 carries N-linked (GlcNAc...) asparagine glycosylation. A helical transmembrane segment spans residues 224-244 (SLAVAFTFPFITTVTCYLLII). Over 245-260 (RSLRQGLRVEKRLKTK) the chain is Cytoplasmic. Residues 261–281 (AVRMIAIVLAIFLVCFVPYHV) traverse the membrane as a helical segment. N-linked (GlcNAc...) asparagine glycosylation occurs at N282. At 282 to 308 (NRSVYVLHYRSHGASCATQRILALANR) the chain is on the extracellular side. A helical transmembrane segment spans residues 309-329 (ITSCLTSLNGALDPIMYFFVA). Topologically, residues 330-367 (EKFRHALCNLLCGKRLKGPPPSFEGKTNESSLSAKSEL) are cytoplasmic.

It belongs to the G-protein coupled receptor 1 family. Expressed in brain, kidney, heart and umbilical vein endothelial cells. Highest level in brain.

It is found in the cell membrane. Functionally, dual specificity receptor for uracil nucleotides and cysteinyl leukotrienes (CysLTs). Signals through G(i) and inhibition of adenylyl cyclase. May mediate brain damage by nucleotides and CysLTs following ischemia. This is Uracil nucleotide/cysteinyl leukotriene receptor (GPR17) from Homo sapiens (Human).